The chain runs to 216 residues: Uracil phosphoribosyltransferase (216 aa).

5-phospho-alpha-D-ribose 1-diphosphate is bound by residues Arg-85, Arg-110, and 135–143; that span reads DPMVATGYS. Residues Ile-200 and 205–207 each bind uracil; that span reads GDA. 5-phospho-alpha-D-ribose 1-diphosphate is bound at residue Asp-206.

This sequence belongs to the UPRTase family. Mg(2+) is required as a cofactor.

The enzyme catalyses UMP + diphosphate = 5-phospho-alpha-D-ribose 1-diphosphate + uracil. It participates in pyrimidine metabolism; UMP biosynthesis via salvage pathway; UMP from uracil: step 1/1. Allosterically activated by GTP. In terms of biological role, catalyzes the conversion of uracil and 5-phospho-alpha-D-ribose 1-diphosphate (PRPP) to UMP and diphosphate. This is Uracil phosphoribosyltransferase from Burkholderia multivorans (strain ATCC 17616 / 249).